Reading from the N-terminus, the 198-residue chain is Nucleoid occlusion factor SlmA (198 aa).

The 61-residue stretch at 10–70 folds into the HTH tetR-type domain; it reads NRREEILQSL…SLIEFIEDSL (61 aa). The H-T-H motif DNA-binding region spans 33–52; sequence TTAKLAASVGVSEAALYRHF. The stretch at 119–144 forms a coiled coil; sequence DRLQGRINQLFERIEVQLRQVMREKK.

The protein belongs to the nucleoid occlusion factor SlmA family. In terms of assembly, homodimer. Interacts with FtsZ.

The protein localises to the cytoplasm. Its subcellular location is the nucleoid. In terms of biological role, required for nucleoid occlusion (NO) phenomenon, which prevents Z-ring formation and cell division over the nucleoid. Acts as a DNA-associated cell division inhibitor that binds simultaneously chromosomal DNA and FtsZ, and disrupts the assembly of FtsZ polymers. SlmA-DNA-binding sequences (SBS) are dispersed on non-Ter regions of the chromosome, preventing FtsZ polymerization at these regions. This is Nucleoid occlusion factor SlmA from Klebsiella pneumoniae (strain 342).